The primary structure comprises 241 residues: Carboxy-S-adenosyl-L-methionine synthase (241 aa).

S-adenosyl-L-methionine contacts are provided by residues Tyr-38, 63 to 65 (GCS), 88 to 89 (DN), 116 to 117 (DI), Asn-131, and Arg-198.

The protein belongs to the class I-like SAM-binding methyltransferase superfamily. Cx-SAM synthase family. In terms of assembly, homodimer.

It carries out the reaction prephenate + S-adenosyl-L-methionine = carboxy-S-adenosyl-L-methionine + 3-phenylpyruvate + H2O. Catalyzes the conversion of S-adenosyl-L-methionine (SAM) to carboxy-S-adenosyl-L-methionine (Cx-SAM). The chain is Carboxy-S-adenosyl-L-methionine synthase from Haemophilus influenzae (strain ATCC 51907 / DSM 11121 / KW20 / Rd).